A 222-amino-acid polypeptide reads, in one-letter code: Ribonuclease T (222 aa).

An Exonuclease domain is found at 20 to 194 (VVIDVETAGF…YDTERTAELF (175 aa)). Mg(2+)-binding residues include D23, E25, H181, and D186. H181 serves as the catalytic Proton donor/acceptor.

Belongs to the RNase T family. In terms of assembly, homodimer. Mg(2+) serves as cofactor.

Trims short 3' overhangs of a variety of RNA species, leaving a one or two nucleotide 3' overhang. Responsible for the end-turnover of tRNA: specifically removes the terminal AMP residue from uncharged tRNA (tRNA-C-C-A). Also appears to be involved in tRNA biosynthesis. The sequence is that of Ribonuclease T from Shewanella sp. (strain ANA-3).